The chain runs to 1213 residues: DNA-directed RNA polymerase subunit beta' (1213 aa).

Zn(2+) contacts are provided by Cys-60, Cys-62, Cys-75, and Cys-78. Positions 450, 452, and 454 each coordinate Mg(2+). Residues Cys-819, Cys-893, Cys-900, and Cys-903 each contribute to the Zn(2+) site.

It belongs to the RNA polymerase beta' chain family. In terms of assembly, the RNAP catalytic core consists of 2 alpha, 1 beta, 1 beta' and 1 omega subunit. When a sigma factor is associated with the core the holoenzyme is formed, which can initiate transcription. Requires Mg(2+) as cofactor. Zn(2+) is required as a cofactor.

The catalysed reaction is RNA(n) + a ribonucleoside 5'-triphosphate = RNA(n+1) + diphosphate. In terms of biological role, DNA-dependent RNA polymerase catalyzes the transcription of DNA into RNA using the four ribonucleoside triphosphates as substrates. This chain is DNA-directed RNA polymerase subunit beta', found in Streptococcus pyogenes serotype M1.